The primary structure comprises 200 residues: Holliday junction resolvase RecU (200 aa).

The segment at 1–25 (MTIRYPNGKRYNQASQPHKTPIKKH) is disordered. T85, D87, E100, and Q119 together coordinate Mg(2+).

Belongs to the RecU family. It depends on Mg(2+) as a cofactor.

It is found in the cytoplasm. The catalysed reaction is Endonucleolytic cleavage at a junction such as a reciprocal single-stranded crossover between two homologous DNA duplexes (Holliday junction).. In terms of biological role, endonuclease that resolves Holliday junction intermediates in genetic recombination. Cleaves mobile four-strand junctions by introducing symmetrical nicks in paired strands. Promotes annealing of linear ssDNA with homologous dsDNA. Required for DNA repair, homologous recombination and chromosome segregation. This Bacillus thuringiensis (strain Al Hakam) protein is Holliday junction resolvase RecU.